The sequence spans 511 residues: DnaJ homolog 1, mitochondrial (511 aa).

A mitochondrion-targeting transit peptide spans 1–55 (MAFQQGVLSRCSGVFRHHVGHSRHINNILYRHAIAFASIAPRIPKSSFHTSAIRN). In terms of domain architecture, J spans 59-127 (FKDPYDTLGL…RQQYDQFGPA (69 aa)). The CR-type zinc finger occupies 217–297 (SKNVQLRFSA…CHGEGVQVNR (81 aa)). 4 CXXCXGXG motif repeats span residues 230–237 (CSTCSGTG), 247–254 (CSTCHGTG), 269–276 (CPTCNGEG), and 285–292 (CTKCHGEG).

The protein resides in the mitochondrion. In terms of biological role, plays a role in mitochondrial biogenesis and protein folding. This chain is DnaJ homolog 1, mitochondrial (MDJ1), found in Saccharomyces cerevisiae (strain ATCC 204508 / S288c) (Baker's yeast).